Here is a 246-residue protein sequence, read N- to C-terminus: Mast cell protease-like protein (246 aa).

The signal sequence occupies residues 1-18 (MQALLFLMALLLPSGAGA). The propeptide at 19 to 20 (EE) is activation peptide. The Peptidase S1 domain maps to 21–244 (IIGGVESEPH…HVPWINRVIK (224 aa)). An intrachain disulfide couples Cys50 to Cys66. Catalysis depends on charge relay system residues His65 and Asp109. 2 cysteine pairs are disulfide-bonded: Cys143/Cys208 and Cys174/Cys187. The active-site Charge relay system is Ser202.

This sequence belongs to the peptidase S1 family. Granzyme subfamily.

The chain is Mast cell protease-like protein (Mcptl) from Mus musculus (Mouse).